The chain runs to 147 residues: Hemoglobin subunit epsilon (147 aa).

Residues 3–147 enclose the Globin domain; sequence HLTAEEKSSV…VATALAHKYH (145 aa). Serine 14 and serine 51 each carry phosphoserine. Residues histidine 64 and histidine 93 each contribute to the heme b site.

It belongs to the globin family. Heterotetramer of two alpha chains and two epsilon chains in early embryonic hemoglobin Gower-2; two zeta chains and two epsilon chains in early embryonic hemoglobin Gower-1. Red blood cells.

Functionally, the epsilon chain is a beta-type chain of early mammalian embryonic hemoglobin. This Carlito syrichta (Philippine tarsier) protein is Hemoglobin subunit epsilon (HBE1).